A 439-amino-acid chain; its full sequence is Transcriptional enhancer factor TEF-5 (439 aa).

Polar residues predominate over residues 1-12 (MASNSWTANSSP). The tract at residues 1–34 (MASNSWTANSSPGEAREDGSEGLDKGLDNDAEGV) is disordered. An N-acetylalanine modification is found at Ala-2. A compositionally biased stretch (basic and acidic residues) spans 14–28 (EAREDGSEGLDKGLD). The TEA DNA-binding region spans 28–104 (DNDAEGVWSP…QVLARKKVRE (77 aa)). Residue Ser-148 is modified to Phosphoserine. A transcriptional activation region spans residues 173 to 439 (GPSQDIKPFA…QHHVYKLVKD (267 aa)).

In terms of assembly, interacts with YAP1 and WWTR1/TAZ. As to expression, expressed in embryos as well as in many adult tissues.

Its subcellular location is the nucleus. Transcription factor which plays a key role in the Hippo signaling pathway, a pathway involved in organ size control and tumor suppression by restricting proliferation and promoting apoptosis. The core of this pathway is composed of a kinase cascade wherein MST1/MST2, in complex with its regulatory protein SAV1, phosphorylates and activates LATS1/2 in complex with its regulatory protein MOB1, which in turn phosphorylates and inactivates YAP1 oncoprotein and WWTR1/TAZ. Acts by mediating gene expression of YAP1 and WWTR1/TAZ, thereby regulating cell proliferation, migration and epithelial mesenchymal transition (EMT) induction. This is Transcriptional enhancer factor TEF-5 (Tead3) from Mus musculus (Mouse).